The following is a 219-amino-acid chain: Transmembrane emp24 domain-containing protein 10 (219 aa).

A signal peptide spans 1–31 (MSGSSGPQAQRGPCPFALLLLLLLGPSSVLA). The segment at 1–142 (MSGSSGPQAQ…KNYEEIAKVE (142 aa)) is required for interaction with STX17. Residues 32–185 (ISFHLPVNSR…RDTNESTNTR (154 aa)) are Lumenal-facing. The GOLD domain occupies 41-193 (RKCLREEIHK…TRVLYFSIFS (153 aa)). The interval 147 to 178 (LEVELRRLEDLSESIVNDFAYMKKREEEMRDT) is required for TMED10 and TMED2 cis-Golgi network localization. 2 positions are modified to dimethylated arginine: R171 and R176. A glycan (N-linked (GlcNAc...) asparagine) is linked at N179. The helical transmembrane segment at 186–206 (VLYFSIFSMFCLIGLATWQVF) threads the bilayer. Residues 204–219 (QVFYLRRFFKAKKLIE) form an interaction with COPG1 region. Residues 207 to 219 (YLRRFFKAKKLIE) are Cytoplasmic-facing. The interaction with ARF1 and IL1B stretch occupies residues 207-219 (YLRRFFKAKKLIE). The COPII vesicle coat-binding signature appears at 211 to 212 (FF). A COPI vesicle coat-binding motif is present at residues 211-219 (FFKAKKLIE).

This sequence belongs to the EMP24/GP25L family. As to quaternary structure, predominantly dimeric and to a lesser extent monomeric in the ER. Monomer and dimer in ERGIC and cis-Golgi network. Forms homooligomer (via GOLD domain); the assembly is promoted by direct binding with leaderless cargos and may form a protein channel that facilitates cargo entry into the ERGIC. Forms heterooligomeric complexes with other members of the p24 family such as TMED2, TMED7 and TMED9. Interacts (via GOLD domain) with TMED2 (via GOLD domain); the complex is required for export of TMED10 from the ER to the cis-Golgi network; the complex is proposed to be involved in cis-Golgi network dynamics and / or biogenesis. Associates with the COPI vesicle coat subunits (coatomer). Tetramerization of the cytoplasmic domain at the Golgi membrane in vitro; the complex is proposed to interact with COPI coatomer and induce budding of the vesicles. Interacts with COPG1; the interaction involves TMED10 homodimer. Interacts with ARF1 (GDP-bound); the interaction probably involves a TMED10 oligomer. Interacts with SEC23A, SEC24B, SEC24C and SEC24D components of the coat protein complex II/COPII, indicative of an association of TMED10 with the COPII vesicle coat. Interacts with CD59. Interacts with MPPE1/PGAP5; the complex might recruit and sort GPI-anchored proteins to the ER-exit site, or the interaction might lead to recycling of PGAP5 between the ER and the Golgi. Interacts with F2LR1/PAR2. Interacts with KDELR2/ERD2; the interaction is disrupted by KDELR2 ligand. Found in a complex composed at least of SURF4, TMED2 and TMED10. Associates with the presenilin-dependent gamma-secretase complex. Interacts with STX17; the interaction is direct. Interacts with IL-1; the interaction is direct. Interacts with RAB21 (active GTP-bound form); the interaction is indirect and regulates TMED10 abundance and localization at the Golgi.

Its subcellular location is the endoplasmic reticulum membrane. The protein resides in the endoplasmic reticulum-Golgi intermediate compartment membrane. It is found in the golgi apparatus membrane. It localises to the golgi apparatus. The protein localises to the cis-Golgi network membrane. Its subcellular location is the trans-Golgi network membrane. The protein resides in the cytoplasmic vesicle. It is found in the secretory vesicle membrane. It localises to the cell membrane. The protein localises to the melanosome. In terms of biological role, cargo receptor involved in protein vesicular trafficking and quality control in the endoplasmic reticulum (ER) and Golgi. The p24 protein family is a group of transmembrane proteins that bind coat protein complex I/COPI and coat protein complex II/COPII involved in vesicular trafficking between the membranes. Acts at the lumenal side for incorporation of secretory cargo molecules into transport vesicles and involved in vesicle coat formation at the cytoplasmic side. Mainly functions in the early secretory pathway and cycles between the ER, ER-Golgi intermediate compartment (ERGIC) and Golgi, mediating cargo transport through COPI and COPII-coated vesicles. In COPII vesicle-mediated anterograde transport, involved in the transport of GPI-anchored proteins by acting together with TMED2 as their cargo receptor; the function specifically implies SEC24C and SEC24D of the COPII vesicle coat and lipid raft-like microdomains of the ER. Recognizes GPI anchors structural remodeled in the ER by the GPI inositol-deacylase/PGAP1 and the metallophosphoesterase MPPE1/PGAP5. In COPI vesicle-mediated retrograde transport, involved in the biogenesis of COPI vesicles and vesicle coat recruitment. Involved in trafficking of amyloid beta A4 protein and soluble APP-beta release (independent from the modulation of gamma-secretase activity). Involved in the KDELR2-mediated retrograde transport of the toxin A subunit (CTX-A-K63)together with COPI and the COOH terminus of KDELR2. On Golgi membranes, acts as a primary receptor for ARF1-GDP, a GTP-binding protein involved in COPI-vesicle formation. Increases coatomer-dependent GTPase-activating activity of ARFGAP2 which mediates the hydrolysis of ARF1-bound GTP and therefore modulates protein trafficking from the Golgi apparatus. Involved in the exocytic trafficking of G protein-coupled receptors F2LR1/PAR2 (trypsin and tryspin-like enzyme receptor), OPRM1 (opioid receptor) and P2RY4 (UTD and UDP receptor) from the Golgi to the plasma membrane, thus contributing to receptor resensitization. In addition to its cargo receptor activity, may also act as a protein channel after oligomerization, facilitating the post-translational entry of leaderless cytoplasmic cargo into the ERGIC. Involved in the translocation into ERGIC, the vesicle entry and the secretion of leaderless cargos (lacking the secretion signal sequence), including the mature form of interleukin 1/IL-1 family members, the alpha-crystallin B chain HSPB5, the carbohydrate-binding proteins galectin-1/LGALS1 and galectin-3/LGALS3, the microtubule-associated protein Tau/MAPT, and the annexin A1/ANXA1; the translocation process is dependent on cargo protein unfolding and enhanced by chaperones HSP90AB1 and HSP90B1/GRP9. Could also associates with the presenilin-dependent gamma-secretase complex in order to regulate gamma-cleavages of the amyloid beta A4 protein to yield amyloid-beta 40/Abeta40. The polypeptide is Transmembrane emp24 domain-containing protein 10 (TMED10) (Bos taurus (Bovine)).